A 177-amino-acid polypeptide reads, in one-letter code: Outer membrane lipoprotein Blc (177 aa).

The signal sequence occupies residues 1-18 (MRLLPLVAAATAAFLVVA). Cys19 carries the N-palmitoyl cysteine lipid modification. The S-diacylglycerol cysteine moiety is linked to residue Cys19.

It belongs to the calycin superfamily. Lipocalin family. In terms of assembly, homodimer.

It is found in the cell outer membrane. Functionally, involved in the storage or transport of lipids necessary for membrane maintenance under stressful conditions. Displays a binding preference for lysophospholipids. The chain is Outer membrane lipoprotein Blc (blc) from Escherichia coli O157:H7.